Here is a 185-residue protein sequence, read N- to C-terminus: Ribosome-recycling factor (185 aa).

Positions 138–157 (ELKKLEKDHTASEDEVKRAQ) are disordered.

The protein belongs to the RRF family.

The protein localises to the cytoplasm. Responsible for the release of ribosomes from messenger RNA at the termination of protein biosynthesis. May increase the efficiency of translation by recycling ribosomes from one round of translation to another. The sequence is that of Ribosome-recycling factor from Desulfitobacterium hafniense (strain DSM 10664 / DCB-2).